The primary structure comprises 865 residues: Fanconi-associated nuclease 1 homolog (865 aa).

The UBZ4-type zinc-finger motif lies at 35–62; it reads GKICPLCETKFSLASYKSHMNTCNVADD. Cys38, Cys41, His53, and Cys57 together coordinate Zn(2+). 2 disordered regions span residues 90-140 and 162-187; these read DASF…SLDV and RRSS…PVKK. Composition is skewed to basic and acidic residues over residues 93–112 and 174–187; these read FSDK…REVP and DQAD…PVKK. Mn(2+)-binding residues include Glu682, Asp810, Glu825, and Val826. One can recognise a VRR-NUC domain in the interval 744 to 857; that stretch reads QELIEENIRK…GIRAEVCHVA (114 aa).

It belongs to the FAN1 family. Mn(2+) is required as a cofactor. The cofactor is Mg(2+).

The protein resides in the nucleus. The enzyme catalyses Hydrolytically removes 5'-nucleotides successively from the 3'-hydroxy termini of 3'-hydroxy-terminated oligonucleotides.. Functionally, nuclease required for the repair of DNA interstrand cross-links (ICL). Acts as a 5'-3' exonuclease that anchors at a cut end of DNA and cleaves DNA successively at every third nucleotide, allowing to excise an ICL from one strand through flanking incisions. This Caenorhabditis elegans protein is Fanconi-associated nuclease 1 homolog (fan-1).